The sequence spans 326 residues: Dehydrogenase/reductase SDR family protein 7-like (326 aa).

Topologically, residues 1–17 (MKVQDMDKCAPSSDWNV) are cytoplasmic. Residues 18–38 (LYWVLGTVLMPVALPLAIINI) traverse the membrane as a helical; Signal-anchor for type II membrane protein segment. Residues 39-326 (WQRFQAQKFR…KLENAEKKST (288 aa)) are Peroxisomal-facing. Residue 57–81 (LITGASSGLGESLAHVFYRAGCRVI) participates in NAD(+) binding. Ser193 serves as a coordination point for substrate. Tyr206 acts as the Proton acceptor in catalysis.

The protein belongs to the short-chain dehydrogenases/reductases (SDR) family.

The protein localises to the peroxisome membrane. In terms of biological role, putative oxidoreductase. In Drosophila melanogaster (Fruit fly), this protein is Dehydrogenase/reductase SDR family protein 7-like.